We begin with the raw amino-acid sequence, 347 residues long: Endophilin-A3 (347 aa).

The tract at residues 1–21 (MSVAGLKKQFHKASQLFSEKI) is membrane-binding amphipathic helix. The region spanning 18 to 249 (SEKISGAEGT…LQMRISAASS (232 aa)) is the BAR domain. The interval 60 to 87 (PNPAYRAKLGMLNTVSKIRGQVKTTGYP) is required for dimerization upon membrane association. Residues 181–201 (EEVRQAVEKFEESKELAERSM) are a coiled coil. Positions 218–254 (FIEAALDYHRQSTEILQELQSKLQMRISAASSVPRRE) are interaction with ARC. Residues 248-271 (SSVPRREYKPRPVKRSSSELNGVS) form a disordered region. Phosphoserine is present on Ser265. In terms of domain architecture, SH3 spans 285-344 (MDQPCCRGLYDFEPENQGELGFKEGDIITLTNQIDENWYEGMIHGESGFFPINYVEVIVP).

This sequence belongs to the endophilin family. Interacts with ARC. Interacts with DNM1, SGIP1 and SYNJ1. Interacts with the huntingtin exon 1 protein (HDEX1P) containing a glutamine repeat in the pathological range and promotes formation of insoluble polyglutamine-containing aggregates in vivo. Interacts with DYDC1. Interacts with FASLG. Interacts with ATXN2. Interacts with BIN2. Brain and testis.

It localises to the cytoplasm. The protein resides in the early endosome membrane. In terms of biological role, implicated in endocytosis. May recruit other proteins to membranes with high curvature. This Homo sapiens (Human) protein is Endophilin-A3 (SH3GL3).